The following is a 185-amino-acid chain: MANPILEQAKENMEKAEASLRRTLGQIRAGRANASLVNRVNVEYYGAMTPLNQIAAITIPEARVLLITPYDKGALEDIEKALYTADIGISPANDGSVIRLVIPQLTGERRKEIAKEVGKEAELAKVVVRNARRDAMDNLKKAEKASEISEDEMHDLEEQVQNLTNEATKKIDAISKDKEKEITEG.

Residues 163–185 (LTNEATKKIDAISKDKEKEITEG) form a disordered region. The segment covering 167–185 (ATKKIDAISKDKEKEITEG) has biased composition (basic and acidic residues).

The protein belongs to the RRF family.

It is found in the cytoplasm. In terms of biological role, responsible for the release of ribosomes from messenger RNA at the termination of protein biosynthesis. May increase the efficiency of translation by recycling ribosomes from one round of translation to another. This Latilactobacillus sakei subsp. sakei (strain 23K) (Lactobacillus sakei subsp. sakei) protein is Ribosome-recycling factor.